A 122-amino-acid polypeptide reads, in one-letter code: ATP-dependent Clp protease adapter protein ClpS (122 aa).

The tract at residues 1-33 (MHAPSQIRLTFNQDHPEPHEHEDEGAGLAVQES) is disordered. Basic and acidic residues predominate over residues 14–24 (DHPEPHEHEDE).

Belongs to the ClpS family. In terms of assembly, binds to the N-terminal domain of the chaperone ClpA.

Functionally, involved in the modulation of the specificity of the ClpAP-mediated ATP-dependent protein degradation. In Pseudomonas aeruginosa (strain ATCC 15692 / DSM 22644 / CIP 104116 / JCM 14847 / LMG 12228 / 1C / PRS 101 / PAO1), this protein is ATP-dependent Clp protease adapter protein ClpS.